A 41-amino-acid chain; its full sequence is MARAKQTARKSTGAEAPRKQLASKAARKSAPATGGIKKPHR.

The tract at residues 1-41 (MARAKQTARKSTGAEAPRKQLASKAARKSAPATGGIKKPHR) is disordered.

It belongs to the histone H3 family. As to quaternary structure, the nucleosome is a histone octamer containing two molecules each of H2A, H2B, H3 and H4 assembled in one H3-H4 heterotetramer and two H2A-H2B heterodimers. The octamer wraps approximately 147 bp of DNA.

The protein resides in the nucleus. The protein localises to the chromosome. In terms of biological role, core component of nucleosome. Nucleosomes wrap and compact DNA into chromatin, limiting DNA accessibility to the cellular machineries which require DNA as a template. Histones thereby play a central role in transcription regulation, DNA repair, DNA replication and chromosomal stability. DNA accessibility is regulated via a complex set of post-translational modifications of histones, also called histone code, and nucleosome remodeling. This is Histone H3.2 from Tetrahymena borealis.